Reading from the N-terminus, the 130-residue chain is HTH-type transcriptional repressor YtrA (130 aa).

One can recognise an HTH gntR-type domain in the interval 10–78; it reads TPIYEQIIQQ…RGRGTYISEN (69 aa). The H-T-H motif DNA-binding region spans 38 to 57; that stretch reads VRELATIIIANPNTVSKAYK.

Negatively regulates ABC transporter complex ytrBCDEF that plays a role in acetoin utilization during stationary phase and sporulation. This chain is HTH-type transcriptional repressor YtrA (ytrA), found in Bacillus subtilis (strain 168).